The following is a 312-amino-acid chain: tRNA dimethylallyltransferase (312 aa).

Residue 11 to 18 participates in ATP binding; the sequence is GLTATGKT. A substrate-binding site is contributed by 13 to 18; that stretch reads TATGKT. Positions 36–39 are interaction with substrate tRNA; it reads DSMC.

This sequence belongs to the IPP transferase family. In terms of assembly, monomer. Requires Mg(2+) as cofactor.

It catalyses the reaction adenosine(37) in tRNA + dimethylallyl diphosphate = N(6)-dimethylallyladenosine(37) in tRNA + diphosphate. In terms of biological role, catalyzes the transfer of a dimethylallyl group onto the adenine at position 37 in tRNAs that read codons beginning with uridine, leading to the formation of N6-(dimethylallyl)adenosine (i(6)A). The polypeptide is tRNA dimethylallyltransferase (Caldicellulosiruptor bescii (strain ATCC BAA-1888 / DSM 6725 / KCTC 15123 / Z-1320) (Anaerocellum thermophilum)).